The primary structure comprises 380 residues: Endo-polygalacturonase (380 aa).

The first 17 residues, 1-17 (MVHILSSALSLLRLGAA), serve as a signal peptide directing secretion. The propeptide occupies 18-42 (VSAAPAPAPTAAPNVADALAAVEKR). Cys-46 and Cys-64 form a disulfide bridge. PbH1 repeat units lie at residues 178-207 (ASGL…DVGS), 208-229 (STDI…AINS), 230-250 (GTGI…SIGS), 259-280 (VSDV…RIKT), 288-310 (VSGV…VIEQ), and 322-343 (TSGV…SSSA). Asp-222 acts as the Proton donor in catalysis. Residues Cys-224 and Cys-240 are joined by a disulfide bond. The active site involves His-244. Residues Cys-350 and Cys-353 are joined by a disulfide bond. Asn-361 is a glycosylation site (N-linked (GlcNAc...) asparagine). A disulfide bridge connects residues Cys-371 and Cys-380.

It belongs to the glycosyl hydrolase 28 family.

The protein localises to the secreted. It carries out the reaction (1,4-alpha-D-galacturonosyl)n+m + H2O = (1,4-alpha-D-galacturonosyl)n + (1,4-alpha-D-galacturonosyl)m.. The protein is Endo-polygalacturonase (PG1) of Sclerotinia sclerotiorum (White mold).